The chain runs to 171 residues: Shikimate kinase (171 aa).

14–19 (GAGKST) provides a ligand contact to ATP. Residue Ser-18 coordinates Mg(2+). Positions 36, 60, and 82 each coordinate substrate. Arg-120 contacts ATP. Arg-139 serves as a coordination point for substrate. Gln-156 lines the ATP pocket.

The protein belongs to the shikimate kinase family. As to quaternary structure, monomer. The cofactor is Mg(2+).

The protein resides in the cytoplasm. It carries out the reaction shikimate + ATP = 3-phosphoshikimate + ADP + H(+). It functions in the pathway metabolic intermediate biosynthesis; chorismate biosynthesis; chorismate from D-erythrose 4-phosphate and phosphoenolpyruvate: step 5/7. Its function is as follows. Catalyzes the specific phosphorylation of the 3-hydroxyl group of shikimic acid using ATP as a cosubstrate. The sequence is that of Shikimate kinase from Shewanella woodyi (strain ATCC 51908 / MS32).